The primary structure comprises 500 residues: Glycerol kinase (500 aa).

Thr11 contacts ADP. ATP is bound by residues Thr11, Thr12, and Ser13. Thr11 contacts sn-glycerol 3-phosphate. Arg15 is an ADP binding site. 4 residues coordinate sn-glycerol 3-phosphate: Arg81, Glu82, Tyr133, and Asp242. The glycerol site is built by Arg81, Glu82, Tyr133, Asp242, and Gln243. ADP-binding residues include Thr264 and Gly307. Residues Thr264, Gly307, Gln311, and Gly411 each contribute to the ATP site. Position 411 (Gly411) interacts with ADP.

The protein belongs to the FGGY kinase family.

It carries out the reaction glycerol + ATP = sn-glycerol 3-phosphate + ADP + H(+). The protein operates within polyol metabolism; glycerol degradation via glycerol kinase pathway; sn-glycerol 3-phosphate from glycerol: step 1/1. Its activity is regulated as follows. Inhibited by fructose 1,6-bisphosphate (FBP). Functionally, key enzyme in the regulation of glycerol uptake and metabolism. Catalyzes the phosphorylation of glycerol to yield sn-glycerol 3-phosphate. This chain is Glycerol kinase, found in Bradyrhizobium sp. (strain ORS 278).